The primary structure comprises 276 residues: Vitamin B12-binding protein (276 aa).

The first 20 residues, 1–20 (MLVIRLIACTFLFITPSLLA), serve as a signal peptide directing secretion. The 248-residue stretch at 27-274 (RIISLAPHAT…QVCTYLKIAQ (248 aa)) folds into the Fe/B12 periplasmic-binding domain. Residue Tyr-54 participates in cyanocob(III)alamin binding. Cys-187 and Cys-267 are joined by a disulfide.

It belongs to the BtuF family. The complex is composed of two ATP-binding proteins (BtuD), two transmembrane proteins (BtuC) and a solute-binding protein (BtuF).

The protein localises to the periplasm. Its function is as follows. Part of the ABC transporter complex BtuCDF involved in vitamin B12 import. Binds vitamin B12 and delivers it to the periplasmic surface of BtuC. The polypeptide is Vitamin B12-binding protein (Vibrio cholerae serotype O1 (strain ATCC 39541 / Classical Ogawa 395 / O395)).